The sequence spans 555 residues: CTP synthase (555 aa).

Residues 1 to 277 are amidoligase domain; that stretch reads MPKEPETEYD…DQHVMERLNV (277 aa). Serine 26 is a CTP binding site. UTP is bound at residue serine 26. Position 27-32 (27-32) interacts with ATP; sequence GLGKGI. Tyrosine 67 contributes to the L-glutamine binding site. Aspartate 84 contributes to the ATP binding site. Mg(2+)-binding residues include aspartate 84 and glutamate 152. CTP-binding positions include 159–161, 198–203, and lysine 234; these read DIE and KTKPTQ. UTP-binding positions include 198-203 and lysine 234; that span reads KTKPTQ. The region spanning 307–542 is the Glutamine amidotransferase type-1 domain; it reads LVGKYDLEDA…LKSVDSTLDA (236 aa). An L-glutamine-binding site is contributed by glycine 364. Cysteine 391 (nucleophile; for glutamine hydrolysis) is an active-site residue. L-glutamine contacts are provided by residues 392–395, glutamate 415, and arginine 472; that span reads LGFQ. Catalysis depends on residues histidine 515 and glutamate 517.

This sequence belongs to the CTP synthase family. Homotetramer.

It catalyses the reaction UTP + L-glutamine + ATP + H2O = CTP + L-glutamate + ADP + phosphate + 2 H(+). It carries out the reaction L-glutamine + H2O = L-glutamate + NH4(+). The enzyme catalyses UTP + NH4(+) + ATP = CTP + ADP + phosphate + 2 H(+). It functions in the pathway pyrimidine metabolism; CTP biosynthesis via de novo pathway; CTP from UDP: step 2/2. Allosterically activated by GTP, when glutamine is the substrate; GTP has no effect on the reaction when ammonia is the substrate. The allosteric effector GTP functions by stabilizing the protein conformation that binds the tetrahedral intermediate(s) formed during glutamine hydrolysis. Inhibited by the product CTP, via allosteric rather than competitive inhibition. Its function is as follows. Catalyzes the ATP-dependent amination of UTP to CTP with either L-glutamine or ammonia as the source of nitrogen. Regulates intracellular CTP levels through interactions with the four ribonucleotide triphosphates. The sequence is that of CTP synthase from Haloquadratum walsbyi (strain DSM 16790 / HBSQ001).